A 550-amino-acid polypeptide reads, in one-letter code: Glucose-6-phosphate isomerase (550 aa).

The Proton donor role is filled by Glu357. Catalysis depends on residues His389 and Lys509.

The protein belongs to the GPI family.

It is found in the cytoplasm. The enzyme catalyses alpha-D-glucose 6-phosphate = beta-D-fructose 6-phosphate. The protein operates within carbohydrate biosynthesis; gluconeogenesis. It participates in carbohydrate degradation; glycolysis; D-glyceraldehyde 3-phosphate and glycerone phosphate from D-glucose: step 2/4. Its function is as follows. Catalyzes the reversible isomerization of glucose-6-phosphate to fructose-6-phosphate. This Anaeromyxobacter dehalogenans (strain 2CP-C) protein is Glucose-6-phosphate isomerase.